Here is a 261-residue protein sequence, read N- to C-terminus: Triosephosphate isomerase (261 aa).

Position 10–12 (10–12 (NWK)) interacts with substrate. Histidine 100 serves as the catalytic Electrophile. Residue glutamate 172 is the Proton acceptor of the active site. Residues glycine 178, serine 218, and 239–240 (GG) contribute to the substrate site.

Belongs to the triosephosphate isomerase family. Homodimer.

Its subcellular location is the cytoplasm. It carries out the reaction D-glyceraldehyde 3-phosphate = dihydroxyacetone phosphate. The protein operates within carbohydrate biosynthesis; gluconeogenesis. Its pathway is carbohydrate degradation; glycolysis; D-glyceraldehyde 3-phosphate from glycerone phosphate: step 1/1. Involved in the gluconeogenesis. Catalyzes stereospecifically the conversion of dihydroxyacetone phosphate (DHAP) to D-glyceraldehyde-3-phosphate (G3P). The sequence is that of Triosephosphate isomerase from Mycolicibacterium paratuberculosis (strain ATCC BAA-968 / K-10) (Mycobacterium paratuberculosis).